Here is a 206-residue protein sequence, read N- to C-terminus: uncharacterized protein (206 aa).

2 disordered regions span residues 38–88 and 160–206; these read RLQQ…NKNA and HQNT…SVQE. Low complexity predominate over residues 40–73; the sequence is QQQQQQQQQQQQNRTASSLQQPQQQQPISPPLFL. A Phosphoserine modification is found at S68. Over residues 78–88 the composition is skewed to polar residues; that stretch reads TSENSNLNKNA. Low complexity predominate over residues 165-186; the sequence is SSSNPGSMSSSPPNSASSIFNS. Residues 192-206 show a composition bias toward polar residues; that stretch reads PYTSQSFNPLESVQE.

The protein localises to the cytoplasm. This is an uncharacterized protein from Saccharomyces cerevisiae (strain ATCC 204508 / S288c) (Baker's yeast).